We begin with the raw amino-acid sequence, 546 residues long: CTP synthase (546 aa).

The tract at residues 1-269 (MNSNTKIIFV…DAKLVELLNL (269 aa)) is amidoligase domain. Residue S16 coordinates CTP. S16 serves as a coordination point for UTP. Residues 17–22 (SLGKGV) and D74 each bind ATP. Mg(2+) contacts are provided by D74 and E143. Residues 150–152 (DIE), 190–195 (KTKPTQ), and K226 contribute to the CTP site. Residues 190–195 (KTKPTQ) and K226 contribute to the UTP site. Residues 294 to 546 (TIAMVGKYVS…IQAAIENSNN (253 aa)) enclose the Glutamine amidotransferase type-1 domain. An L-glutamine-binding site is contributed by G356. C383 (nucleophile; for glutamine hydrolysis) is an active-site residue. L-glutamine contacts are provided by residues 384-387 (LGMQ), E407, and R474. Active-site residues include H519 and E521.

Belongs to the CTP synthase family. In terms of assembly, homotetramer.

The catalysed reaction is UTP + L-glutamine + ATP + H2O = CTP + L-glutamate + ADP + phosphate + 2 H(+). It carries out the reaction L-glutamine + H2O = L-glutamate + NH4(+). The enzyme catalyses UTP + NH4(+) + ATP = CTP + ADP + phosphate + 2 H(+). It participates in pyrimidine metabolism; CTP biosynthesis via de novo pathway; CTP from UDP: step 2/2. Its activity is regulated as follows. Allosterically activated by GTP, when glutamine is the substrate; GTP has no effect on the reaction when ammonia is the substrate. The allosteric effector GTP functions by stabilizing the protein conformation that binds the tetrahedral intermediate(s) formed during glutamine hydrolysis. Inhibited by the product CTP, via allosteric rather than competitive inhibition. Functionally, catalyzes the ATP-dependent amination of UTP to CTP with either L-glutamine or ammonia as the source of nitrogen. Regulates intracellular CTP levels through interactions with the four ribonucleotide triphosphates. This Francisella tularensis subsp. tularensis (strain FSC 198) protein is CTP synthase.